A 603-amino-acid polypeptide reads, in one-letter code: Probable methyltransferase PMT4 (603 aa).

Residues 1–12 (MKVASVIGLRPR) are Cytoplasmic-facing. A helical; Signal-anchor for type II membrane protein transmembrane segment spans residues 13-33 (ISGLLFLTLGVIALITILVPN). At 34-603 (SDSSSTTSTT…LVCQKPLLKK (570 aa)) the chain is on the lumenal side. N-linked (GlcNAc...) asparagine glycosylation is found at asparagine 96 and asparagine 393.

It belongs to the methyltransferase superfamily.

The protein localises to the endoplasmic reticulum membrane. In Arabidopsis thaliana (Mouse-ear cress), this protein is Probable methyltransferase PMT4.